A 374-amino-acid polypeptide reads, in one-letter code: Flagellar P-ring protein 1 (374 aa).

Positions 1–26 (MVPNLMVIKKHLIGLLLILCPLSLQA) are cleaved as a signal peptide.

Belongs to the FlgI family. In terms of assembly, the basal body constitutes a major portion of the flagellar organelle and consists of four rings (L,P,S, and M) mounted on a central rod.

It is found in the periplasm. It localises to the bacterial flagellum basal body. Assembles around the rod to form the L-ring and probably protects the motor/basal body from shearing forces during rotation. The sequence is that of Flagellar P-ring protein 1 from Photobacterium profundum (strain SS9).